The primary structure comprises 206 residues: Small ribosomal subunit protein uS4 (206 aa).

The S4 RNA-binding domain occupies 96-157 (QRLDNVVYRM…KAKKQARIGA (62 aa)).

The protein belongs to the universal ribosomal protein uS4 family. As to quaternary structure, part of the 30S ribosomal subunit. Contacts protein S5. The interaction surface between S4 and S5 is involved in control of translational fidelity.

One of the primary rRNA binding proteins, it binds directly to 16S rRNA where it nucleates assembly of the body of the 30S subunit. In terms of biological role, with S5 and S12 plays an important role in translational accuracy. This Idiomarina loihiensis (strain ATCC BAA-735 / DSM 15497 / L2-TR) protein is Small ribosomal subunit protein uS4.